The chain runs to 220 residues: Charged multivesicular body protein 2a (220 aa).

Coiled coils occupy residues 12–53 (EELL…MAKQ) and 198–219 (EATAALADADADLEERLNNLRR). Positions 196–220 (KGEATAALADADADLEERLNNLRRD) are disordered. The MIT-interacting motif signature appears at 208–218 (ADLEERLNNLR). Positions 211–220 (EERLNNLRRD) are enriched in basic and acidic residues.

The protein belongs to the SNF7 family. Probable core component of the endosomal sorting required for transport complex III (ESCRT-III). ESCRT-III components are thought to multimerize to form a flat lattice on the perimeter membrane of the endosome.

It is found in the late endosome membrane. The protein resides in the cytoplasm. In terms of biological role, probable core component of the endosomal sorting required for transport complex III (ESCRT-III) which is involved in multivesicular bodies (MVBs) formation and sorting of endosomal cargo proteins into MVBs. MVBs contain intraluminal vesicles (ILVs) that are generated by invagination and scission from the limiting membrane of the endosome and mostly are delivered to lysosomes enabling degradation of membrane proteins, such as stimulated growth factor receptors, lysosomal enzymes and lipids. This is Charged multivesicular body protein 2a (chmp2a) from Xenopus laevis (African clawed frog).